Here is a 222-residue protein sequence, read N- to C-terminus: Peptide methionine sulfoxide reductase MsrA (222 aa).

Cysteine 60 is a catalytic residue.

The protein belongs to the MsrA Met sulfoxide reductase family.

The catalysed reaction is L-methionyl-[protein] + [thioredoxin]-disulfide + H2O = L-methionyl-(S)-S-oxide-[protein] + [thioredoxin]-dithiol. It catalyses the reaction [thioredoxin]-disulfide + L-methionine + H2O = L-methionine (S)-S-oxide + [thioredoxin]-dithiol. In terms of biological role, has an important function as a repair enzyme for proteins that have been inactivated by oxidation. Catalyzes the reversible oxidation-reduction of methionine sulfoxide in proteins to methionine. The sequence is that of Peptide methionine sulfoxide reductase MsrA from Pseudomonas putida (strain GB-1).